The sequence spans 120 residues: Large ribosomal subunit protein uL22 (120 aa).

The protein belongs to the universal ribosomal protein uL22 family. Part of the 50S ribosomal subunit.

This protein binds specifically to 23S rRNA; its binding is stimulated by other ribosomal proteins, e.g. L4, L17, and L20. It is important during the early stages of 50S assembly. It makes multiple contacts with different domains of the 23S rRNA in the assembled 50S subunit and ribosome. Its function is as follows. The globular domain of the protein is located near the polypeptide exit tunnel on the outside of the subunit, while an extended beta-hairpin is found that lines the wall of the exit tunnel in the center of the 70S ribosome. This is Large ribosomal subunit protein uL22 from Rippkaea orientalis (strain PCC 8801 / RF-1) (Cyanothece sp. (strain PCC 8801)).